Here is a 339-residue protein sequence, read N- to C-terminus: Transcription factor IIIA (339 aa).

C2H2-type zinc fingers lie at residues 12–36, 42–66, 72–97, 104–128, 134–158, 161–187, 190–212, 219–244, and 250–274; these read FICS…LCKH, FPCT…VLSH, CKCE…KRAH, YVCY…QYIH, FKCS…EKTH, YPCR…AELH, VTCS…KKIH, YRCP…LTFH, and FVCE…FNTH. Residues 271–339 form a disordered region; sequence FNTHDPEKKK…LPVLENLTLK (69 aa). Residues 299 to 309 show a composition bias toward basic residues; that stretch reads KPKKSKKKKKP. A compositionally biased stretch (polar residues) spans 311-323; it reads QTPAMESQEQQPD.

The protein resides in the nucleus. In terms of biological role, involved in ribosomal large subunit biogenesis. Interacts with the internal control region (ICR) of approximately 50 bases within the 5S RNA genes, is required for correct transcription of these genes by RNA polymerase III. Also binds the transcribed 5S RNA's. In Anaxyrus americanus (American toad), this protein is Transcription factor IIIA (gtf3a).